A 318-amino-acid chain; its full sequence is 1-aminocyclopropane-1-carboxylate oxidase (318 aa).

The Fe2OG dioxygenase domain occupies proline 153–proline 253. The Fe cation site is built by histidine 177, aspartate 179, and histidine 234.

This sequence belongs to the iron/ascorbate-dependent oxidoreductase family. Requires Fe cation as cofactor.

The catalysed reaction is 1-aminocyclopropane-1-carboxylate + L-ascorbate + O2 = ethene + L-dehydroascorbate + hydrogen cyanide + CO2 + 2 H2O. It functions in the pathway alkene biosynthesis; ethylene biosynthesis via S-adenosyl-L-methionine; ethylene from S-adenosyl-L-methionine: step 2/2. The protein is 1-aminocyclopropane-1-carboxylate oxidase (DK-ACO1) of Diospyros kaki (Kaki persimmon).